Here is a 275-residue protein sequence, read N- to C-terminus: 4,5-DOPA dioxygenase extradiol 1 (275 aa).

Residues His22, His60, His182, and His236 each coordinate Zn(2+).

Belongs to the DODA-type extradiol aromatic ring-opening dioxygenase family. Zn(2+) is required as a cofactor.

It catalyses the reaction L-dopa + O2 = 4-(L-alanin-3-yl)-2-hydroxy-cis,cis-muconate 6-semialdehyde + H(+). It functions in the pathway pigment biosynthesis; betalain biosynthesis. Functionally, opens the cyclic ring of dihydroxy-phenylalanine (DOPA) between carbons 4 and 5, thus producing an unstable seco-DOPA that rearranges nonenzymatically to betalamic acid. The sequence is that of 4,5-DOPA dioxygenase extradiol 1 from Beta vulgaris (Sugar beet).